Consider the following 293-residue polypeptide: Pantothenate synthetase (293 aa).

38 to 45 (MGALHEGH) is a binding site for ATP. The active-site Proton donor is the His-45. Position 69 (Gln-69) interacts with (R)-pantoate. Residue Gln-69 participates in beta-alanine binding. 155–158 (GEKD) lines the ATP pocket. (R)-pantoate is bound at residue Gln-161. 192-195 (QSSR) is a binding site for ATP.

This sequence belongs to the pantothenate synthetase family. Homodimer.

The protein localises to the cytoplasm. It carries out the reaction (R)-pantoate + beta-alanine + ATP = (R)-pantothenate + AMP + diphosphate + H(+). The protein operates within cofactor biosynthesis; (R)-pantothenate biosynthesis; (R)-pantothenate from (R)-pantoate and beta-alanine: step 1/1. In terms of biological role, catalyzes the condensation of pantoate with beta-alanine in an ATP-dependent reaction via a pantoyl-adenylate intermediate. The chain is Pantothenate synthetase from Hyphomonas neptunium (strain ATCC 15444).